The chain runs to 124 residues: Ubiquitin-related modifier 1 (124 aa).

The segment at 34–53 (IPSLVPKDNTTSAKNPPPKD) is disordered. 1-thioglycine is present on Gly124. Residue Gly124 forms a Glycyl lysine isopeptide (Gly-Lys) (interchain with K-? in acceptor proteins) linkage.

The protein belongs to the URM1 family. C-terminal thiocarboxylation occurs in 2 steps, it is first acyl-adenylated (-COAMP) via the hesA/moeB/thiF part of UBA4, then thiocarboxylated (-COSH) via the rhodanese domain of UBA4.

It is found in the cytoplasm. It participates in tRNA modification; 5-methoxycarbonylmethyl-2-thiouridine-tRNA biosynthesis. Functionally, acts as a sulfur carrier required for 2-thiolation of mcm(5)S(2)U at tRNA wobble positions of cytosolic tRNA(Lys), tRNA(Glu) and tRNA(Gln). Serves as sulfur donor in tRNA 2-thiolation reaction by being thiocarboxylated (-COSH) at its C-terminus by the MOCS3 homolog UBA4. The sulfur is then transferred to tRNA to form 2-thiolation of mcm(5)S(2)U. Prior mcm(5) tRNA modification by the elongator complex is required for 2-thiolation. Also acts as a ubiquitin-like protein (UBL) that is covalently conjugated via an isopeptide bond to lysine residues of target proteins such as AHP1. The thiocarboxylated form serves as substrate for conjugation and oxidative stress specifically induces the formation of UBL-protein conjugates. This chain is Ubiquitin-related modifier 1, found in Coprinopsis cinerea (strain Okayama-7 / 130 / ATCC MYA-4618 / FGSC 9003) (Inky cap fungus).